The chain runs to 107 residues: ATP-dependent Clp protease adapter protein ClpS (107 aa).

The segment at 1–20 is disordered; the sequence is MAQKHEHDTSVITESAPKQK.

The protein belongs to the ClpS family. Binds to the N-terminal domain of the chaperone ClpA.

In terms of biological role, involved in the modulation of the specificity of the ClpAP-mediated ATP-dependent protein degradation. In Myxococcus xanthus (strain DK1622), this protein is ATP-dependent Clp protease adapter protein ClpS.